A 200-amino-acid chain; its full sequence is Shikimate kinase (200 aa).

Position 41-46 (41-46) interacts with ATP; sequence GVGKSS. Ser-45 contributes to the Mg(2+) binding site. Residues Asp-63, Arg-87, and Gly-109 each coordinate substrate. Arg-147 serves as a coordination point for ATP. Arg-166 is a binding site for substrate.

It belongs to the shikimate kinase family. As to quaternary structure, monomer. The cofactor is Mg(2+).

It is found in the cytoplasm. The catalysed reaction is shikimate + ATP = 3-phosphoshikimate + ADP + H(+). It participates in metabolic intermediate biosynthesis; chorismate biosynthesis; chorismate from D-erythrose 4-phosphate and phosphoenolpyruvate: step 5/7. Catalyzes the specific phosphorylation of the 3-hydroxyl group of shikimic acid using ATP as a cosubstrate. This is Shikimate kinase from Caulobacter vibrioides (strain NA1000 / CB15N) (Caulobacter crescentus).